Here is a 188-residue protein sequence, read N- to C-terminus: MAASLAVEKKKLKNPPLQLHYLGDRVLRQPAKRVSKVDDSIRDIARKMLQTMYSADGIGLAAPQVGINKQILVIDIHPDDPEAEPLVMINPVIKDFSEELEVCQEGCLSIPGVYLEVRRPAMVEVSYKDEWGRPQVIMAGGLLARAIQHEIDHLTGVMFVDRVENQALLRHELKEHGFTASAVRPIAA.

Fe cation-binding residues include Cys-107 and His-149. Glu-150 is an active-site residue. His-153 contributes to the Fe cation binding site.

This sequence belongs to the polypeptide deformylase family. Fe(2+) is required as a cofactor.

It carries out the reaction N-terminal N-formyl-L-methionyl-[peptide] + H2O = N-terminal L-methionyl-[peptide] + formate. Its function is as follows. Removes the formyl group from the N-terminal Met of newly synthesized proteins. Requires at least a dipeptide for an efficient rate of reaction. N-terminal L-methionine is a prerequisite for activity but the enzyme has broad specificity at other positions. This Thermosynechococcus vestitus (strain NIES-2133 / IAM M-273 / BP-1) protein is Peptide deformylase.